The chain runs to 29 residues: Cytochrome c oxidase subunit 7A2, mitochondrial (29 aa).

The residue at position 10 (lysine 10) is an N6-acetyllysine.

The protein belongs to the cytochrome c oxidase VIIa family. As to quaternary structure, component of the cytochrome c oxidase (complex IV, CIV), a multisubunit enzyme composed of 14 subunits. The complex is composed of a catalytic core of 3 subunits MT-CO1, MT-CO2 and MT-CO3, encoded in the mitochondrial DNA, and 11 supernumerary subunits COX4I, COX5A, COX5B, COX6A, COX6B, COX6C, COX7A, COX7B, COX7C, COX8 and NDUFA4, which are encoded in the nuclear genome. The complex exists as a monomer or a dimer and forms supercomplexes (SCs) in the inner mitochondrial membrane with NADH-ubiquinone oxidoreductase (complex I, CI) and ubiquinol-cytochrome c oxidoreductase (cytochrome b-c1 complex, complex III, CIII), resulting in different assemblies (supercomplex SCI(1)III(2)IV(1) and megacomplex MCI(2)III(2)IV(2)). Interacts with PET100.

It localises to the mitochondrion inner membrane. Its pathway is energy metabolism; oxidative phosphorylation. Functionally, component of the cytochrome c oxidase, the last enzyme in the mitochondrial electron transport chain which drives oxidative phosphorylation. The respiratory chain contains 3 multisubunit complexes succinate dehydrogenase (complex II, CII), ubiquinol-cytochrome c oxidoreductase (cytochrome b-c1 complex, complex III, CIII) and cytochrome c oxidase (complex IV, CIV), that cooperate to transfer electrons derived from NADH and succinate to molecular oxygen, creating an electrochemical gradient over the inner membrane that drives transmembrane transport and the ATP synthase. Cytochrome c oxidase is the component of the respiratory chain that catalyzes the reduction of oxygen to water. Electrons originating from reduced cytochrome c in the intermembrane space (IMS) are transferred via the dinuclear copper A center (CU(A)) of subunit 2 and heme A of subunit 1 to the active site in subunit 1, a binuclear center (BNC) formed by heme A3 and copper B (CU(B)). The BNC reduces molecular oxygen to 2 water molecules using 4 electrons from cytochrome c in the IMS and 4 protons from the mitochondrial matrix. This chain is Cytochrome c oxidase subunit 7A2, mitochondrial (COX7A2), found in Canis lupus familiaris (Dog).